A 212-amino-acid polypeptide reads, in one-letter code: MKTKIAKHLLQIKAVSLKPDEPFTWASGIKSPIYCDNRLTLSYPEVRHDIAEGLKELILTHFEGAEVIAGTATAGIPHAALAADRLNAPMCYVRSKPKAHGKGNQIEGAVSKGQKVVVVEDLISTGGSVLEVVAALQEAGCDVLGVAAIFTYGLPKATAAFQEKNIPYVTLTDYDTLTDVALELKAIEPSAMNKLKRWRQDPSSESWMEETV.

5-phospho-alpha-D-ribose 1-diphosphate contacts are provided by residues arginine 94, lysine 98, histidine 100, and 120 to 128; that span reads EDLISTGGS. Serine 124 is an orotate binding site.

The protein belongs to the purine/pyrimidine phosphoribosyltransferase family. PyrE subfamily. In terms of assembly, homodimer. Requires Mg(2+) as cofactor.

The catalysed reaction is orotidine 5'-phosphate + diphosphate = orotate + 5-phospho-alpha-D-ribose 1-diphosphate. It participates in pyrimidine metabolism; UMP biosynthesis via de novo pathway; UMP from orotate: step 1/2. Functionally, catalyzes the transfer of a ribosyl phosphate group from 5-phosphoribose 1-diphosphate to orotate, leading to the formation of orotidine monophosphate (OMP). This chain is Orotate phosphoribosyltransferase, found in Bacillus pumilus (strain SAFR-032).